The chain runs to 434 residues: UDP-N-acetylglucosamine 1-carboxyvinyltransferase (434 aa).

Position 22 to 23 (22 to 23) interacts with phosphoenolpyruvate; the sequence is KN. Position 97 (Arg-97) interacts with UDP-N-acetyl-alpha-D-glucosamine. Catalysis depends on Asp-121, which acts as the Proton donor. Asp-319 and Met-341 together coordinate UDP-N-acetyl-alpha-D-glucosamine.

Belongs to the EPSP synthase family. MurA subfamily.

Its subcellular location is the cytoplasm. It catalyses the reaction phosphoenolpyruvate + UDP-N-acetyl-alpha-D-glucosamine = UDP-N-acetyl-3-O-(1-carboxyvinyl)-alpha-D-glucosamine + phosphate. It participates in cell wall biogenesis; peptidoglycan biosynthesis. Functionally, cell wall formation. Adds enolpyruvyl to UDP-N-acetylglucosamine. This chain is UDP-N-acetylglucosamine 1-carboxyvinyltransferase, found in Porphyromonas gingivalis (strain ATCC BAA-308 / W83).